Here is a 160-residue protein sequence, read N- to C-terminus: Non-secretory ribonuclease (160 aa).

Positions 1-27 (MVPKLFTSPICLLLLLGLMGVEGSLHA) are cleaved as a signal peptide. C-linked (Man) tryptophan glycosylation occurs at tryptophan 34. The active-site Proton acceptor is histidine 42. Asparagine 44 carries an N-linked (GlcNAc...) asparagine glycan. Cystine bridges form between cysteine 50–cysteine 110, cysteine 64–cysteine 122, cysteine 82–cysteine 137, and cysteine 89–cysteine 98. At tyrosine 60 the chain carries 3'-nitrotyrosine. 65–69 (KNQNT) contacts substrate. 3 N-linked (GlcNAc...) asparagine glycosylation sites follow: asparagine 92, asparagine 111, and asparagine 138. Histidine 155 (proton donor) is an active-site residue.

It belongs to the pancreatic ribonuclease family. As to quaternary structure, interacts with and forms a tight 1:1 complex with RNH1. Dimerization of two such complexes may occur.

The protein localises to the lysosome. The protein resides in the cytoplasmic granule. The enzyme catalyses an [RNA] containing cytidine + H2O = an [RNA]-3'-cytidine-3'-phosphate + a 5'-hydroxy-ribonucleotide-3'-[RNA].. It carries out the reaction an [RNA] containing uridine + H2O = an [RNA]-3'-uridine-3'-phosphate + a 5'-hydroxy-ribonucleotide-3'-[RNA].. Functionally, this is a non-secretory ribonuclease. It is a pyrimidine specific nuclease with a slight preference for U. Cytotoxin and helminthotoxin. Possesses a wide variety of biological activities. The protein is Non-secretory ribonuclease (RNASE2) of Papio hamadryas (Hamadryas baboon).